The primary structure comprises 445 residues: UNC93-like protein MFSD11 (445 aa).

Residues 8-28 form a helical membrane-spanning segment; that stretch reads LLNIIILGIGFMFMFTAFQTS. The N-linked (GlcNAc...) asparagine glycan is linked to asparagine 40. The next 4 membrane-spanning stretches (helical) occupy residues 53 to 73, 74 to 94, 98 to 118, and 138 to 158; these read AIIYSVFSASNLIAPSIVAVI, GCQMSMFLSGLLYSAYIAMFI, TWSFYTLSVLIGIAAAVLWTA, and IFWALLQFSMLFGNLFIYLAW. An N-linked (GlcNAc...) asparagine glycan is attached at asparagine 163. 7 helical membrane-spanning segments follow: residues 170 to 190, 239 to 259, 277 to 297, 309 to 329, 345 to 365, 385 to 405, and 415 to 435; these read RTVFIALTVISLVGSVLFFLI, MLLLSILVAYTGLELTFYSGV, LIGLSGIFVGLGEVLGGGLFG, PVVILGVVVHFLAFYMIYLYM, AFINPSKTIALACSFLLGLGD, APAFAVFKFVQSVSAAVAFFY, and LLILVIFGFFGTISFFFVEWG.

The protein belongs to the unc-93 family.

It is found in the membrane. This Xenopus tropicalis (Western clawed frog) protein is UNC93-like protein MFSD11 (mfsd11).